Consider the following 121-residue polypeptide: Large ribosomal subunit protein bL20 (121 aa).

It belongs to the bacterial ribosomal protein bL20 family.

Binds directly to 23S ribosomal RNA and is necessary for the in vitro assembly process of the 50S ribosomal subunit. It is not involved in the protein synthesizing functions of that subunit. The sequence is that of Large ribosomal subunit protein bL20 from Dinoroseobacter shibae (strain DSM 16493 / NCIMB 14021 / DFL 12).